The chain runs to 477 residues: Argininosuccinate synthase (477 aa).

Residues 17-25 (AFSGGLDTS) and A43 contribute to the ATP site. Residue Y99 coordinates L-citrulline. ATP is bound by residues G129 and T131. 3 residues coordinate L-aspartate: T131, N135, and D136. Position 135 (N135) interacts with L-citrulline. D136 contacts ATP. Residues R139 and S192 each coordinate L-citrulline. Position 194 (D194) interacts with ATP. 3 residues coordinate L-citrulline: T201, E203, and E280. The segment at 450-477 (DQITENPEVQAEPEEEALDAAAMEAGTD) is disordered. Low complexity predominate over residues 468-477 (DAAAMEAGTD).

It belongs to the argininosuccinate synthase family. Type 2 subfamily. Homotetramer.

Its subcellular location is the cytoplasm. It catalyses the reaction L-citrulline + L-aspartate + ATP = 2-(N(omega)-L-arginino)succinate + AMP + diphosphate + H(+). Its pathway is amino-acid biosynthesis; L-arginine biosynthesis; L-arginine from L-ornithine and carbamoyl phosphate: step 2/3. This chain is Argininosuccinate synthase, found in Nocardioides sp. (strain ATCC BAA-499 / JS614).